Here is a 91-residue protein sequence, read N- to C-terminus: DNA-directed RNA polymerase subunit omega (91 aa).

This sequence belongs to the RNA polymerase subunit omega family. As to quaternary structure, the RNAP catalytic core consists of 2 alpha, 1 beta, 1 beta' and 1 omega subunit. When a sigma factor is associated with the core the holoenzyme is formed, which can initiate transcription.

It catalyses the reaction RNA(n) + a ribonucleoside 5'-triphosphate = RNA(n+1) + diphosphate. Promotes RNA polymerase assembly. Latches the N- and C-terminal regions of the beta' subunit thereby facilitating its interaction with the beta and alpha subunits. In Pectobacterium carotovorum subsp. carotovorum (strain PC1), this protein is DNA-directed RNA polymerase subunit omega.